The following is a 538-amino-acid chain: Atos homolog protein B (538 aa).

Over residues 1-18 (MRHVQAEPSPSSEPEAGP) the composition is skewed to low complexity. Disordered regions lie at residues 1–103 (MRHV…GLLG), 156–185 (HTRD…QLHT), and 197–308 (GGKS…PMGR). Pro residues predominate over residues 227 to 238 (HTPPGPGPPGPC). Residues serine 254 and serine 255 each carry the phosphoserine modification. The span at 274–286 (AANSSDAKATSFW) shows a compositional bias: polar residues. A required for macropage invasion region spans residues 348–430 (LLGNFEESLL…VPKVGTVQVT (83 aa)). The interval 436-444 (QTVVKMFLV) is transactivation domain 1 (TAD1).

Belongs to the ATOS family.

The protein resides in the nucleus. Functionally, transcription regulator that may syncronize transcriptional and translational programs. This chain is Atos homolog protein B, found in Macaca fascicularis (Crab-eating macaque).